A 287-amino-acid chain; its full sequence is GTPase Era (287 aa).

In terms of domain architecture, Era-type G spans 6-178; it reads FSGTSVIIGK…IQNKLKIVPK (173 aa). Positions 14 to 21 are G1; it reads GKPNVGKS. 14–21 is a binding site for GTP; sequence GKPNVGKS. Residues 40–44 form a G2 region; that stretch reads HTTQS. Positions 62–65 are G3; the sequence is DTPG. Residues 62-66 and 124-127 each bind GTP; these read DTPGI and NKID. Residues 124 to 127 form a G4 region; that stretch reads NKID. The G5 stretch occupies residues 154–156; that stretch reads ISG. One can recognise a KH type-2 domain in the interval 207-282; that stretch reads LGDELPYSIQ…SIYLSLKVIK (76 aa).

This sequence belongs to the TRAFAC class TrmE-Era-EngA-EngB-Septin-like GTPase superfamily. Era GTPase family. In terms of assembly, monomer.

The protein resides in the cytoplasm. It localises to the cell membrane. An essential GTPase that binds both GDP and GTP, with rapid nucleotide exchange. Plays a role in 16S rRNA processing and 30S ribosomal subunit biogenesis and possibly also in cell cycle regulation and energy metabolism. The polypeptide is GTPase Era (Buchnera aphidicola subsp. Baizongia pistaciae (strain Bp)).